A 456-amino-acid polypeptide reads, in one-letter code: Exodeoxyribonuclease 7 large subunit (456 aa).

It belongs to the XseA family. Heterooligomer composed of large and small subunits.

It localises to the cytoplasm. The enzyme catalyses Exonucleolytic cleavage in either 5'- to 3'- or 3'- to 5'-direction to yield nucleoside 5'-phosphates.. Its function is as follows. Bidirectionally degrades single-stranded DNA into large acid-insoluble oligonucleotides, which are then degraded further into small acid-soluble oligonucleotides. This is Exodeoxyribonuclease 7 large subunit from Azotobacter vinelandii (strain DJ / ATCC BAA-1303).